The sequence spans 75 residues: Small ribosomal subunit protein bS18 (75 aa).

This sequence belongs to the bacterial ribosomal protein bS18 family. As to quaternary structure, part of the 30S ribosomal subunit. Forms a tight heterodimer with protein bS6.

Its function is as follows. Binds as a heterodimer with protein bS6 to the central domain of the 16S rRNA, where it helps stabilize the platform of the 30S subunit. The sequence is that of Small ribosomal subunit protein bS18 from Psychromonas ingrahamii (strain DSM 17664 / CCUG 51855 / 37).